An 835-amino-acid polypeptide reads, in one-letter code: MFIAQNWVTGLLGHSNPGWSVTSEELDAGYVRVGFETEGYAAIPATTGPLVLGVVESIEELTEFKKPIRHCFVNVGQANGTGENQSIICGARNFAEGDTVVVALPGAVLPGDFAIGARETYGRMSAGMICSAAELGLADKQNSGIITLPAESGQPGDDARAVLGLDDTVFEVNVTPDRGYALSARGLTRELASAFNLTYTDVAEDTRVAGIELTAPEPAGELIDIDVREETNTVRFGLRKVSGIDPNAESPFWLQRELMLCRQRPVNAATDVTNYVMMLLGAPMHAFDATKITGGLTVRNAQPGEKFETLDHVIRDLSGEDVVICDETGIQSMAGVMGGVTSEISNETTEVYFESAIWDPKTVARTSRRHKLSSEASRRFERGVDPAIVEVALDMACSLLVEIAGGTIDAGRTLIGEVPTMPSITMPVSRPSELAGVEYSPETVVARLEEVGCTVSVNGDVLTVVPPTWRSDLTMAADLVEEVLRLEGLEAIPTIVPTAPAGRGLSDAQKRRRAIGHALAYAGYAEIIPSPFMNPETFDVWGLDADDERRNTVTVLNPLEADSNVLSTTLLPSMLDAVRRNVTRGTGDFSLFGVQQVSFERGNGVSPMPSVKQRPSAEVVAELLDTLPEQPLHAATVGTGNIEFEGPWGSGRAYTYADAIESARIVARAAGIELELANADELPWHPGRCAALLVDGHVVGHAGELHPQVLERAGLPARTCAMEINIDALPLRENLPAPVLSAFPALHQDIALVVDETVPAEQVRAVVEEGAGELVETVELFDVYRSEQLGEGKKSLAFSLLFRAPDRTLTDEEANVARLAAAELAKERLGAEMRG.

The tRNA-binding domain maps to 44 to 160 (PATTGPLVLG…ESGQPGDDAR (117 aa)). In terms of domain architecture, B5 spans 419–494 (PTMPSITMPV…RLEGLEAIPT (76 aa)). Residues Asp-472, Asp-478, Glu-481, and Glu-482 each contribute to the Mg(2+) site. In terms of domain architecture, FDX-ACB spans 741–834 (SAFPALHQDI…AKERLGAEMR (94 aa)).

It belongs to the phenylalanyl-tRNA synthetase beta subunit family. Type 1 subfamily. As to quaternary structure, tetramer of two alpha and two beta subunits. Requires Mg(2+) as cofactor.

The protein resides in the cytoplasm. It carries out the reaction tRNA(Phe) + L-phenylalanine + ATP = L-phenylalanyl-tRNA(Phe) + AMP + diphosphate + H(+). The sequence is that of Phenylalanine--tRNA ligase beta subunit from Corynebacterium efficiens (strain DSM 44549 / YS-314 / AJ 12310 / JCM 11189 / NBRC 100395).